A 125-amino-acid polypeptide reads, in one-letter code: Large ribosomal subunit protein uL22c (125 aa).

The protein belongs to the universal ribosomal protein uL22 family. As to quaternary structure, part of the 50S ribosomal subunit.

It localises to the plastid. Its subcellular location is the chloroplast. In terms of biological role, this protein binds specifically to 23S rRNA. Its function is as follows. The globular domain of the protein is located near the polypeptide exit tunnel on the outside of the subunit, while an extended beta-hairpin is found that lines the wall of the exit tunnel in the center of the 70S ribosome. The sequence is that of Large ribosomal subunit protein uL22c (rpl22) from Nymphaea alba (White water-lily).